Consider the following 468-residue polypeptide: Abscisic acid 8'-hydroxylase 4 (468 aa).

The helical transmembrane segment at Ile-4 to Ser-24 threads the bilayer. Cys-415 contacts heme.

The protein belongs to the cytochrome P450 family. The cofactor is heme. As to expression, mainly expressed in flowers. Lower expression in siliques, rosette leaves, roots and stems. Not expressed in dry seeds. Expressed in silique envelopes, but not in embryo or endosperm during the seed development.

The protein resides in the membrane. It carries out the reaction 2-cis-(+)-abscisate + reduced [NADPH--hemoprotein reductase] + O2 = (+)-8'-hydroxyabscisate + oxidized [NADPH--hemoprotein reductase] + H2O + H(+). Its pathway is plant hormone degradation; abscisic acid degradation. Involved in the oxidative degradation of abscisic acid, but not in the isomerization of the produced 8'-hydroxyabscisic acid (8'-OH-ABA) to (-)-phaseic acid (PA). In Arabidopsis thaliana (Mouse-ear cress), this protein is Abscisic acid 8'-hydroxylase 4 (CYP707A4).